Here is a 272-residue protein sequence, read N- to C-terminus: Shikimate dehydrogenase (NADP(+)) (272 aa).

Residues 14 to 16 and Thr61 each bind shikimate; that span reads SLS. The active-site Proton acceptor is Lys65. Asp102 is a shikimate binding site. NADP(+) contacts are provided by residues 127 to 131, 151 to 156, and Leu215; these read GAGGA and NRTPSK. A shikimate-binding site is contributed by Tyr217. Residue Gly239 participates in NADP(+) binding.

The protein belongs to the shikimate dehydrogenase family. Homodimer.

It carries out the reaction shikimate + NADP(+) = 3-dehydroshikimate + NADPH + H(+). It functions in the pathway metabolic intermediate biosynthesis; chorismate biosynthesis; chorismate from D-erythrose 4-phosphate and phosphoenolpyruvate: step 4/7. Functionally, involved in the biosynthesis of the chorismate, which leads to the biosynthesis of aromatic amino acids. Catalyzes the reversible NADPH linked reduction of 3-dehydroshikimate (DHSA) to yield shikimate (SA). The protein is Shikimate dehydrogenase (NADP(+)) of Coxiella burnetii (strain CbuG_Q212) (Coxiella burnetii (strain Q212)).